The chain runs to 155 residues: 6,7-dimethyl-8-ribityllumazine synthase (155 aa).

Residues F23, 57-59 (AFE), and 81-83 (AVI) each bind 5-amino-6-(D-ribitylamino)uracil. Residue 86-87 (ST) coordinates (2S)-2-hydroxy-3-oxobutyl phosphate. The active-site Proton donor is H89. Residue F114 coordinates 5-amino-6-(D-ribitylamino)uracil. R128 is a (2S)-2-hydroxy-3-oxobutyl phosphate binding site.

It belongs to the DMRL synthase family.

It catalyses the reaction (2S)-2-hydroxy-3-oxobutyl phosphate + 5-amino-6-(D-ribitylamino)uracil = 6,7-dimethyl-8-(1-D-ribityl)lumazine + phosphate + 2 H2O + H(+). The protein operates within cofactor biosynthesis; riboflavin biosynthesis; riboflavin from 2-hydroxy-3-oxobutyl phosphate and 5-amino-6-(D-ribitylamino)uracil: step 1/2. Functionally, catalyzes the formation of 6,7-dimethyl-8-ribityllumazine by condensation of 5-amino-6-(D-ribitylamino)uracil with 3,4-dihydroxy-2-butanone 4-phosphate. This is the penultimate step in the biosynthesis of riboflavin. This chain is 6,7-dimethyl-8-ribityllumazine synthase, found in Geobacter sulfurreducens (strain ATCC 51573 / DSM 12127 / PCA).